Reading from the N-terminus, the 449-residue chain is Aspartyl protease AED3 (449 aa).

The signal sequence occupies residues 1–23; the sequence is MASSSLHFFFFLTLLLPFTFTTA. The Peptidase A1 domain maps to 104-444; the sequence is YVVRAKLGTP…DVPNSRIGIA (341 aa). Asp-122 is an active-site residue. An intrachain disulfide couples Cys-132 to Cys-138. Residues Asn-140, Asn-148, Asn-184, Asn-211, and Asn-297 are each glycosylated (N-linked (GlcNAc...) asparagine). The active site involves Asp-328. N-linked (GlcNAc...) asparagine glycosylation is present at Asn-353. A disulfide bridge links Cys-366 with Cys-405.

The protein belongs to the peptidase A1 family.

Its subcellular location is the secreted. It localises to the extracellular space. It is found in the apoplast. The protein is Aspartyl protease AED3 of Arabidopsis thaliana (Mouse-ear cress).